A 345-amino-acid polypeptide reads, in one-letter code: Phosphate acyltransferase (345 aa).

The protein belongs to the PlsX family. As to quaternary structure, homodimer. Probably interacts with PlsY.

It localises to the cytoplasm. It catalyses the reaction a fatty acyl-[ACP] + phosphate = an acyl phosphate + holo-[ACP]. It functions in the pathway lipid metabolism; phospholipid metabolism. In terms of biological role, catalyzes the reversible formation of acyl-phosphate (acyl-PO(4)) from acyl-[acyl-carrier-protein] (acyl-ACP). This enzyme utilizes acyl-ACP as fatty acyl donor, but not acyl-CoA. The polypeptide is Phosphate acyltransferase (Wolbachia sp. subsp. Brugia malayi (strain TRS)).